Here is a 189-residue protein sequence, read N- to C-terminus: Dynactin subunit 6 (189 aa).

It belongs to the dynactin subunits 5/6 family. Dynactin subunit 6 subfamily. In terms of assembly, subunit of dynactin, a multiprotein complex part of a tripartite complex with dynein and a adapter, such as BICDL1, BICD2 or HOOK3. The dynactin complex is built around ACTR1A/ACTB filament and consists of an actin-related filament composed of a shoulder domain, a pointed end and a barbed end.

It localises to the cytoplasm. The protein resides in the cytoskeleton. Part of the dynactin complex that activates the molecular motor dynein for ultra-processive transport along microtubules. In Dictyostelium discoideum (Social amoeba), this protein is Dynactin subunit 6 (dynF).